Reading from the N-terminus, the 84-residue chain is ATP synthase subunit c (84 aa).

The next 2 membrane-spanning stretches (helical) occupy residues 9-29 and 54-74; these read IIAS…GFAI and IVAG…LLFI.

Belongs to the ATPase C chain family. As to quaternary structure, F-type ATPases have 2 components, F(1) - the catalytic core - and F(0) - the membrane proton channel. F(1) has five subunits: alpha(3), beta(3), gamma(1), delta(1), epsilon(1). F(0) has three main subunits: a(1), b(2) and c(10-14). The alpha and beta chains form an alternating ring which encloses part of the gamma chain. F(1) is attached to F(0) by a central stalk formed by the gamma and epsilon chains, while a peripheral stalk is formed by the delta and b chains.

It localises to the cell inner membrane. Its function is as follows. F(1)F(0) ATP synthase produces ATP from ADP in the presence of a proton or sodium gradient. F-type ATPases consist of two structural domains, F(1) containing the extramembraneous catalytic core and F(0) containing the membrane proton channel, linked together by a central stalk and a peripheral stalk. During catalysis, ATP synthesis in the catalytic domain of F(1) is coupled via a rotary mechanism of the central stalk subunits to proton translocation. Key component of the F(0) channel; it plays a direct role in translocation across the membrane. A homomeric c-ring of between 10-14 subunits forms the central stalk rotor element with the F(1) delta and epsilon subunits. This is ATP synthase subunit c from Pasteurella multocida (strain Pm70).